The following is a 67-amino-acid chain: DNA-directed RNA polymerase subunit omega (67 aa).

Belongs to the RNA polymerase subunit omega family. As to quaternary structure, the RNAP catalytic core consists of 2 alpha, 1 beta, 1 beta' and 1 omega subunit. When a sigma factor is associated with the core the holoenzyme is formed, which can initiate transcription.

It catalyses the reaction RNA(n) + a ribonucleoside 5'-triphosphate = RNA(n+1) + diphosphate. In terms of biological role, promotes RNA polymerase assembly. Latches the N- and C-terminal regions of the beta' subunit thereby facilitating its interaction with the beta and alpha subunits. This is DNA-directed RNA polymerase subunit omega from Bordetella petrii (strain ATCC BAA-461 / DSM 12804 / CCUG 43448).